The chain runs to 257 residues: tRNA pseudouridine synthase A (257 aa).

The active-site Nucleophile is Asp-43. Tyr-94 contacts substrate.

This sequence belongs to the tRNA pseudouridine synthase TruA family.

The enzyme catalyses uridine(38/39/40) in tRNA = pseudouridine(38/39/40) in tRNA. Its function is as follows. Formation of pseudouridine at positions 38, 39 and 40 in the anticodon stem and loop of transfer RNAs. This is tRNA pseudouridine synthase A from Pyrobaculum calidifontis (strain DSM 21063 / JCM 11548 / VA1).